Here is a 401-residue protein sequence, read N- to C-terminus: Beta-ketoadipyl-CoA thiolase (401 aa).

Catalysis depends on cysteine 91, which acts as the Acyl-thioester intermediate. Active-site proton acceptor residues include histidine 357 and cysteine 387.

Belongs to the thiolase-like superfamily. Thiolase family. Homotetramer.

It catalyses the reaction succinyl-CoA + acetyl-CoA = 3-oxoadipyl-CoA + CoA. It participates in aromatic compound metabolism; beta-ketoadipate pathway; acetyl-CoA and succinyl-CoA from 3-oxoadipate: step 2/2. Its function is as follows. Catalyzes thiolytic cleavage of beta-ketoadipyl-CoA to succinyl-CoA and acetyl-CoA. This chain is Beta-ketoadipyl-CoA thiolase (pcaF), found in Pseudomonas knackmussii (strain DSM 6978 / CCUG 54928 / LMG 23759 / B13).